The sequence spans 320 residues: Lipoyl synthase (320 aa).

[4Fe-4S] cluster is bound by residues Cys-67, Cys-72, Cys-78, Cys-93, Cys-97, Cys-100, and Ser-307. A Radical SAM core domain is found at 79 to 296 (FNHGTATFMI…GVIAKEIGFT (218 aa)).

It belongs to the radical SAM superfamily. Lipoyl synthase family. [4Fe-4S] cluster serves as cofactor.

Its subcellular location is the cytoplasm. The catalysed reaction is [[Fe-S] cluster scaffold protein carrying a second [4Fe-4S](2+) cluster] + N(6)-octanoyl-L-lysyl-[protein] + 2 oxidized [2Fe-2S]-[ferredoxin] + 2 S-adenosyl-L-methionine + 4 H(+) = [[Fe-S] cluster scaffold protein] + N(6)-[(R)-dihydrolipoyl]-L-lysyl-[protein] + 4 Fe(3+) + 2 hydrogen sulfide + 2 5'-deoxyadenosine + 2 L-methionine + 2 reduced [2Fe-2S]-[ferredoxin]. Its pathway is protein modification; protein lipoylation via endogenous pathway; protein N(6)-(lipoyl)lysine from octanoyl-[acyl-carrier-protein]: step 2/2. In terms of biological role, catalyzes the radical-mediated insertion of two sulfur atoms into the C-6 and C-8 positions of the octanoyl moiety bound to the lipoyl domains of lipoate-dependent enzymes, thereby converting the octanoylated domains into lipoylated derivatives. The protein is Lipoyl synthase of Pseudoalteromonas atlantica (strain T6c / ATCC BAA-1087).